Reading from the N-terminus, the 488-residue chain is Envelope glycoprotein gp62 (488 aa).

The first 20 residues, 1–20 (MGKFLATLILFFQFCPLILG), serve as a signal peptide directing secretion. Topologically, residues 21 to 442 (DYSPSCCTLT…LGLSQWAREA (422 aa)) are extracellular. 2 N-linked (GlcNAc...) asparagine; by host glycosylation sites follow: asparagine 140 and asparagine 222. Positions 225-228 (CIVC) match the CXXC motif. Disulfide bonds link cysteine 225–cysteine 228, cysteine 225–cysteine 401, and cysteine 393–cysteine 400. Residues asparagine 244 and asparagine 272 are each glycosylated (N-linked (GlcNAc...) asparagine; by host). The tract at residues 313-333 (AVPVAVWLVSALAMGAGVAGR) is fusion peptide. 2 coiled-coil regions span residues 341–387 (ASGK…LLFW) and 397–429 (QEQCCFLNITNSHVSILQERPPLENRVLTGWGL). Residues 376–392 (AQNRRGLDLLFWEQGGL) are immunosuppression. A CX6CC motif is present at residues 393–401 (CKALQEQCC). N-linked (GlcNAc...) asparagine; by host glycosylation occurs at asparagine 404. Residues 443–463 (LQTGITLVALLLLVILAGPCI) traverse the membrane as a helical segment. A lipid anchor (S-palmitoyl cysteine; by host) is attached at cysteine 462. Topologically, residues 464–488 (LRQLRHLPSRVRYPHYSLINPESSL) are cytoplasmic.

In terms of assembly, the mature envelope protein (Env) consists of a trimer of SU-TM heterodimers attached by a labile interchain disulfide bond. Post-translationally, specific enzymatic cleavages in vivo yield mature proteins. Envelope glycoproteins are synthesized as an inactive precursor that is N-glycosylated and processed likely by host cell furin or by a furin-like protease in the Golgi to yield the mature SU and TM proteins. The cleavage site between SU and TM requires the minimal sequence [KR]-X-[KR]-R. The CXXC motif is highly conserved across a broad range of retroviral envelope proteins. It is thought to participate in the formation of a labile disulfide bond possibly with the CX6CC motif present in the transmembrane protein. Isomerization of the intersubunit disulfide bond to an SU intrachain disulfide bond is thought to occur upon receptor recognition in order to allow membrane fusion. In terms of processing, the transmembrane protein is palmitoylated.

It localises to the virion membrane. The protein resides in the host cell membrane. Its function is as follows. The surface protein (SU) attaches the virus to the host cell by binding to its receptor. This interaction triggers the refolding of the transmembrane protein (TM) and is thought to activate its fusogenic potential by unmasking its fusion peptide. Fusion occurs at the host cell plasma membrane. The transmembrane protein (TM) acts as a class I viral fusion protein. Under the current model, the protein has at least 3 conformational states: pre-fusion native state, pre-hairpin intermediate state, and post-fusion hairpin state. During viral and target cell membrane fusion, the coiled coil regions (heptad repeats) assume a trimer-of-hairpins structure, positioning the fusion peptide in close proximity to the C-terminal region of the ectodomain. The formation of this structure appears to drive apposition and subsequent fusion of viral and target cell membranes. Membranes fusion leads to delivery of the nucleocapsid into the cytoplasm. This Homo sapiens (Human) protein is Envelope glycoprotein gp62 (env).